We begin with the raw amino-acid sequence, 374 residues long: 4-hydroxy-3-methylbut-2-en-1-yl diphosphate synthase (flavodoxin) (374 aa).

[4Fe-4S] cluster is bound by residues Cys-268, Cys-271, Cys-303, and Glu-310.

The protein belongs to the IspG family. [4Fe-4S] cluster serves as cofactor.

The enzyme catalyses (2E)-4-hydroxy-3-methylbut-2-enyl diphosphate + oxidized [flavodoxin] + H2O + 2 H(+) = 2-C-methyl-D-erythritol 2,4-cyclic diphosphate + reduced [flavodoxin]. It participates in isoprenoid biosynthesis; isopentenyl diphosphate biosynthesis via DXP pathway; isopentenyl diphosphate from 1-deoxy-D-xylulose 5-phosphate: step 5/6. Its function is as follows. Converts 2C-methyl-D-erythritol 2,4-cyclodiphosphate (ME-2,4cPP) into 1-hydroxy-2-methyl-2-(E)-butenyl 4-diphosphate. This is 4-hydroxy-3-methylbut-2-en-1-yl diphosphate synthase (flavodoxin) from Geobacillus kaustophilus (strain HTA426).